A 280-amino-acid chain; its full sequence is Diaminopimelate epimerase (280 aa).

Residues Asn-14 and Asn-67 each contribute to the substrate site. Cys-76 serves as the catalytic Proton donor. Substrate-binding positions include 77–78 (GN), Asn-193, and 210–211 (ER). Cys-220 (proton acceptor) is an active-site residue. 221–222 (GT) lines the substrate pocket.

This sequence belongs to the diaminopimelate epimerase family. As to quaternary structure, homodimer.

Its subcellular location is the cytoplasm. The catalysed reaction is (2S,6S)-2,6-diaminopimelate = meso-2,6-diaminopimelate. It functions in the pathway amino-acid biosynthesis; L-lysine biosynthesis via DAP pathway; DL-2,6-diaminopimelate from LL-2,6-diaminopimelate: step 1/1. Catalyzes the stereoinversion of LL-2,6-diaminopimelate (L,L-DAP) to meso-diaminopimelate (meso-DAP), a precursor of L-lysine. The chain is Diaminopimelate epimerase from Methanocella arvoryzae (strain DSM 22066 / NBRC 105507 / MRE50).